The sequence spans 79 residues: UPF0180 protein BCG9842_B3897 (79 aa).

Belongs to the UPF0180 family.

The sequence is that of UPF0180 protein BCG9842_B3897 from Bacillus cereus (strain G9842).